The chain runs to 870 residues: A-kinase anchor protein 2 (870 aa).

Disordered regions lie at residues 14 to 43 and 103 to 165; these read PGIT…DHHE and IEKA…SSRD. S122 is subject to Phosphoserine. A compositionally biased stretch (polar residues) spans 133–151; the sequence is GHSTDQPQDMLGNSLQAPA. Phosphoserine is present on S152. The span at 152–161 shows a compositional bias: low complexity; the sequence is SPSSSTSSHC. A Glycyl lysine isopeptide (Lys-Gly) (interchain with G-Cter in SUMO1); alternate cross-link involves residue K174. A Glycyl lysine isopeptide (Lys-Gly) (interchain with G-Cter in SUMO2); alternate cross-link involves residue K174. The stretch at 213–307 forms a coiled coil; that stretch reads EEMIELEKER…QQQQLSTSQL (95 aa). The disordered stretch occupies residues 233–324; the sequence is KNPGIAAKWW…EHLDSIEHTK (92 aa). Residues 259 to 274 are compositionally biased toward basic and acidic residues; it reads LESHRKYKERKEKRAQ. The span at 275 to 302 shows a compositional bias: low complexity; that stretch reads QEQLQLQQQQQQQLQQLQQLQQQQQQQL. Over residues 313–324 the composition is skewed to basic and acidic residues; the sequence is AHEHLDSIEHTK. Residue S347 is modified to Phosphoserine. A disordered region spans residues 409–436; it reads ESQSAGAGTGNAATQGKEGPYSEPSKRG. Over residues 410–424 the composition is skewed to low complexity; that stretch reads SQSAGAGTGNAATQG. S472, S476, and S528 each carry phosphoserine. Polar residues predominate over residues 506-543; the sequence is FSMDNISDSGASNETPNALQENSLADFSLPQTPQTDNP. Disordered stretches follow at residues 506 to 577 and 595 to 688; these read FSMD…DPLE and QVDK…RPEG. At T537 the chain carries Phosphothreonine. The PKA-RII subunit binding domain stretch occupies residues 576 to 589; it reads LEYQAGLLVQNAIQ. Basic and acidic residues predominate over residues 595–608; the sequence is QVDKAEVHTSKEGS. Residue S641 is modified to Phosphoserine. Positions 644–665 are enriched in basic and acidic residues; the sequence is QEKRDVLPKILPGEDKTLREKG. Residues 720-755 adopt a coiled-coil conformation; the sequence is KLRSRKQRTLSMIEEEIRAAQEREEELKRQRQVRQS. 4 positions are modified to phosphoserine: S730, S758, S789, and S796. Positions 740–814 are disordered; that stretch reads QEREEELKRQ…EAAGAQRPKN (75 aa). Residues 755 to 774 show a composition bias toward polar residues; it reads STPSPRAQNAPSLPSRTTCY.

It is found in the apical cell membrane. Functionally, binds to regulatory subunit (RII) of protein kinase A. May be involved in establishing polarity in signaling systems or in integrating PKA-RII isoforms with downstream effectors to capture, amplify and focus diffuse, trans-cellular signals carried by cAMP. Binds to and modulates the structure of the actin cytoskeleton. The chain is A-kinase anchor protein 2 from Rattus norvegicus (Rat).